We begin with the raw amino-acid sequence, 210 residues long: Regulator of G-protein signaling 17 (210 aa).

Positions 1–21 (MRKRQQSQNEGTSAVSQAPGN) are disordered. Positions 84–200 (NFDKMMKTPA…LNSQIYKSLV (117 aa)) constitute an RGS domain.

Interacts with GNAI1 and GNAQ. Interacts with GNAZ and GNAI2. Forms a complex with mu-opioid receptors and G(alpha)z/i2 subunits, including GNAZ and GNAI2; the formation of this complex results in mu-opioid receptor desensitization. In terms of processing, N- and O-glycosylated in synapsomal membranes. Serine phosphorylated in synapsomal membranes. Post-translationally, sumoylated with SUMO1 and SUM02 in synaptosomes. The sumoylated forms act as a scaffold for sequestering mu-opioid receptor-activated G(alpha) subunits.

It localises to the membrane. The protein resides in the synapse. It is found in the synaptosome. Its subcellular location is the nucleus. The protein localises to the cytoplasm. Functionally, regulates G protein-coupled receptor signaling cascades, including signaling via muscarinic acetylcholine receptor CHRM2 and dopamine receptor DRD2. Inhibits signal transduction by increasing the GTPase activity of G protein alpha subunits, thereby driving them into their inactive GDP-bound form. Binds selectively to GNAZ and GNAI2 subunits, accelerates their GTPase activity and regulates their signaling activities. Negatively regulates mu-opioid receptor-mediated activation of the G-proteins. The chain is Regulator of G-protein signaling 17 (RGS17) from Gallus gallus (Chicken).